The sequence spans 236 residues: Penton protein H240R (236 aa).

This sequence belongs to the asfivirus H240R family.

It localises to the virion. In terms of biological role, forms the penton at the fivefold vertices of the icosahedral capsid. Together with the minor capsid proteins (p17, p49, and M1249L), forms a complicated network immediately below the outer capsid shell, stabilizing the whole capsid. In African swine fever virus (isolate Pig/Kenya/KEN-50/1950) (ASFV), this protein is Penton protein H240R.